Consider the following 77-residue polypeptide: Acyl carrier protein (77 aa).

Positions Met-1–Gln-76 constitute a Carrier domain. Ser-36 bears the O-(pantetheine 4'-phosphoryl)serine mark.

The protein belongs to the acyl carrier protein (ACP) family. Post-translationally, 4'-phosphopantetheine is transferred from CoA to a specific serine of apo-ACP by AcpS. This modification is essential for activity because fatty acids are bound in thioester linkage to the sulfhydryl of the prosthetic group.

It localises to the cytoplasm. Its pathway is lipid metabolism; fatty acid biosynthesis. In terms of biological role, carrier of the growing fatty acid chain in fatty acid biosynthesis. In Campylobacter lari (strain RM2100 / D67 / ATCC BAA-1060), this protein is Acyl carrier protein.